The chain runs to 489 residues: MKYHDLRDFLTLLEQQGELKRITLPVDPHLEITEIADRTLRAGGPALLFENPKGYSMPVLCNLFGTPKRVAMGMGQDDVSALRDVGKLLAFLKEPEPPKGFRDLFDKLPQFKQVLNMPTKRLRGAPCQQKIASGDDVDLTRLPIMTCWPDDAAPLITWGLTVTRGPHKERQNLGIYRQQLIDKNKLIMRWLSHRGGALDFQEWLAAHPGERFPISVALGADPATILGAVTPVPDTLSEYAFAGLLRGTKTEVVKCLSNDLEVPASAEIILEGYIEPGEMAPEGPYGDHTGYYNEVDNFPVFTVTHITQREDAIYHSTYTGRPPDEPAVLGVALNEVFVPILQKQFPEIVDFYLPPEGCSYRLAVVTMKKQYAGHAKRVMMGVWSFLRQFMYTKFVIVCDDDVNARDWNDVIWAITTRMDPARDTVLVDNTPIDYLDFASPVSGLGSKMGLDATNKWPGETQREWGRPIVKDPEVTARIDAIWDELAIFK.

A Mn(2+)-binding site is contributed by N172. Residues 175–177, 189–191, and 194–195 each bind prenylated FMN; these read IYR, RWL, and RG. E238 provides a ligand contact to Mn(2+). D287 serves as the catalytic Proton donor.

Belongs to the UbiD family. In terms of assembly, homohexamer. The cofactor is prenylated FMN. Mn(2+) is required as a cofactor.

Its subcellular location is the cell membrane. The enzyme catalyses a 4-hydroxy-3-(all-trans-polyprenyl)benzoate + H(+) = a 2-(all-trans-polyprenyl)phenol + CO2. Its pathway is cofactor biosynthesis; ubiquinone biosynthesis. Its function is as follows. Catalyzes the decarboxylation of 3-octaprenyl-4-hydroxy benzoate to 2-octaprenylphenol, an intermediate step in ubiquinone biosynthesis. The polypeptide is 3-octaprenyl-4-hydroxybenzoate carboxy-lyase (Salmonella arizonae (strain ATCC BAA-731 / CDC346-86 / RSK2980)).